A 431-amino-acid polypeptide reads, in one-letter code: Adenylosuccinate synthetase 2 (431 aa).

GTP is bound by residues 13–19 (GDEGKGK) and 41–43 (GHT). Residue Asp-14 is the Proton acceptor of the active site. Positions 14 and 41 each coordinate Mg(2+). Residues 14–17 (DEGK), 39–42 (NAGH), Thr-130, Arg-144, Gln-225, Thr-240, and Arg-304 contribute to the IMP site. The Proton donor role is filled by His-42. 300–306 (SVTGRPR) provides a ligand contact to substrate. GTP contacts are provided by residues Arg-306, 332 to 334 (KLD), and 414 to 416 (STG).

Belongs to the adenylosuccinate synthetase family. Homodimer. It depends on Mg(2+) as a cofactor.

Its subcellular location is the cytoplasm. The enzyme catalyses IMP + L-aspartate + GTP = N(6)-(1,2-dicarboxyethyl)-AMP + GDP + phosphate + 2 H(+). Its pathway is purine metabolism; AMP biosynthesis via de novo pathway; AMP from IMP: step 1/2. Its function is as follows. Plays an important role in the de novo pathway of purine nucleotide biosynthesis. Catalyzes the first committed step in the biosynthesis of AMP from IMP. This chain is Adenylosuccinate synthetase 2, found in Chromobacterium violaceum (strain ATCC 12472 / DSM 30191 / JCM 1249 / CCUG 213 / NBRC 12614 / NCIMB 9131 / NCTC 9757 / MK).